We begin with the raw amino-acid sequence, 629 residues long: Ionotropic receptor 75a (629 aa).

The Extracellular portion of the chain corresponds to 1 to 335 (MQLVQLANFV…GDVFLQPFSP (335 aa)). N-linked (GlcNAc...) asparagine glycosylation is found at Asn-61, Asn-112, Asn-126, Asn-144, Asn-166, and Asn-232. A helical membrane pass occupies residues 336–356 (LVWYLFGGVLSLIGVLLWITF). Over 357–374 (YMECKRMQKRWRLDYLPS) the chain is Cytoplasmic. The chain crosses the membrane as a helical span at residues 375 to 395 (LLSTFLISFGAACIQSSSLIP). The Extracellular segment spans residues 396–402 (RSAGGRL). A helical membrane pass occupies residues 403–423 (IYFALFLISFIMYNYYTSVVV). Residues 424–592 (SSLLSSPVKS…NFVITVGMEY (169 aa)) are Cytoplasmic-facing. A helical membrane pass occupies residues 593–613 (VAPLLLMLICADILVVVILLV). The Extracellular segment spans residues 614–629 (ELAWKRFFTRPLTIHP).

Belongs to the glutamate-gated ion channel (TC 1.A.10.1) family. Expressed in neurons in the antennal coeloconic 2 (ac2) sensillum class of sensory hairs (at protein level).

It is found in the cell membrane. Its subcellular location is the cell projection. It localises to the dendrite. In terms of biological role, olfactory receptor for propionic, butyric and 2-oxopentanoic acids. In Drosophila sechellia (Fruit fly), this protein is Ionotropic receptor 75a.